The sequence spans 902 residues: Cytosolic 10-formyltetrahydrofolate dehydrogenase (902 aa).

Positions Met1–Ala310 are hydrolase domain. Position 9 is a phosphoserine (Ser9). Position 38 is an N6-succinyllysine (Lys38). Residue Gln88–Ile90 participates in (6R)-10-formyltetrahydrofolate binding. Residue His106 is the Proton donor of the active site. (6R)-10-formyltetrahydrofolate is bound at residue Asp142. Positions Glu318–Leu395 constitute a Carrier domain. Ser354 is modified (O-(pantetheine 4'-phosphoryl)serine). The interval Thr417–Tyr902 is aldehyde dehydrogenase domain. NADP(+) contacts are provided by residues Ile571–Trp573 and Lys597–Gln600. Phosphoserine occurs at positions 629 and 631. Residues Gly630 to Gln635 and Gly650 to Ser651 each bind NADP(+). Lys660 is modified (N6-succinyllysine). Glu673 (proton acceptor) is an active-site residue. Glu673–Leu674 lines the NADP(+) pocket. Residue Cys707 is the Proton donor of the active site. Position 757 (Lys757) interacts with NADP(+). Residue Lys767 is modified to N6-succinyllysine. Residue Glu804–Phe806 coordinates NADP(+). Phosphoserine is present on Ser825. Position 882 is an N6-acetyllysine (Lys882).

It in the N-terminal section; belongs to the GART family. In the C-terminal section; belongs to the aldehyde dehydrogenase family. ALDH1L subfamily. As to quaternary structure, homotetramer. Phosphopantetheinylation at Ser-354 by AASDHPPT is required for the formyltetrahydrofolate dehydrogenase activity. As to expression, highly expressed in liver, pancreas and kidney.

The protein resides in the cytoplasm. Its subcellular location is the cytosol. The catalysed reaction is (6R)-10-formyltetrahydrofolate + NADP(+) + H2O = (6S)-5,6,7,8-tetrahydrofolate + CO2 + NADPH + H(+). Cytosolic 10-formyltetrahydrofolate dehydrogenase that catalyzes the NADP(+)-dependent conversion of 10-formyltetrahydrofolate to tetrahydrofolate and carbon dioxide. May also have an NADP(+)-dependent aldehyde dehydrogenase activity towards formaldehyde, acetaldehyde, propionaldehyde, and benzaldehyde. The chain is Cytosolic 10-formyltetrahydrofolate dehydrogenase from Homo sapiens (Human).